The primary structure comprises 1104 residues: Ankyrin repeat- and BTB/POZ domain-containing protein 3 (1104 aa).

A helical transmembrane segment spans residues 168 to 188; the sequence is IVLSWGLAAHCTAAALAALSL. Residues 260 to 301 form a disordered region; sequence SCSGPGSGSGSGPGPSSGPGAAPAADKEREAPGGGAASGGAC. The span at 264–276 shows a compositional bias: gly residues; sequence PGSGSGSGPGPSS. 5 ANK repeats span residues 603–632, 649–678, 687–716, 730–759, and 825–854; these read QGMT…DLNV, RHWT…KVEG, YSET…DPLI, GDMN…KEKS, and TWLE…TIQE. The BTB domain maps to 923–989; that stretch reads SDVTFLVEGR…LYYGGPESLL (67 aa).

Its subcellular location is the membrane. This is Ankyrin repeat- and BTB/POZ domain-containing protein 3 from Homo sapiens (Human).